A 354-amino-acid polypeptide reads, in one-letter code: MESALALPRLPPHDPGTPVLSVVDMHTGGEPLRIVLAGCPEVSGPTLLAKRRYMRQHLDHVRRRLMFEPRGHRDMYGAVLVPSELPDAHLGVLFLHNEGYSSMCGHAVLALGRFALDFGLVPATPAGTREARVNIHCPCGLVTAFVACEDGRSHGPVRFHSVPAFVLATDLMVDVPGHGKVVVDIAYGGAFYAFVTAEKLGLDICSAKTRDLVDAASAVTKAVKAQFKINHPDSEDLAFLYGTILTDGKDAYTKEPTTNICVFADEQVDRSPTGSGVIARIALQYHKGLLELNQTRAFKSSATGSVFTGKAVREAKCGDFKAVIVEVSGQAHYTGTASFIVEDDDPLRDGFLLK.

Catalysis depends on Cys-104, which acts as the Proton acceptor. Substrate is bound by residues 105–106 (GH), Asp-269, and 274–275 (GS).

This sequence belongs to the proline racemase family. In terms of assembly, homodimer.

The enzyme catalyses trans-3-hydroxy-L-proline = 1-pyrroline-2-carboxylate + H2O. In terms of biological role, catalyzes the dehydration of trans-3-hydroxy-L-proline to delta-1-pyrroline-2-carboxylate (Pyr2C). The polypeptide is Trans-L-3-hydroxyproline dehydratase (L3HYPDH) (Pongo abelii (Sumatran orangutan)).